Consider the following 279-residue polypeptide: MDLYENQRSTSKIKRDASVNDRIPDGLFLACPYCGTQMYNKQLGDYRVCAKCGYGFRLQARERVALLTDNFEEMDADIEMTTPDFPGYAEKLARAKSQTDLGESVLTGVANIEGEQVALGVMDSYFMMGSLGSMTGEKITRLFEYATAHQLPVVLFTASGGARMQEGINSLMQMAKVSAAVAAHQEAGLLYLVVLTDPTTGGVTASFAMQGDVTLAEPHALVGFAGARVIESTIHEKLPKDFQRVETLLENGFVDKIVPRAELGQIIAKIVKLHHRTEI.

Positions 27–279 constitute a CoA carboxyltransferase N-terminal domain; the sequence is LFLACPYCGT…IVKLHHRTEI (253 aa). Residues C31, C34, C49, and C52 each contribute to the Zn(2+) site. A C4-type zinc finger spans residues 31 to 52; the sequence is CPYCGTQMYNKQLGDYRVCAKC.

It belongs to the AccD/PCCB family. In terms of assembly, acetyl-CoA carboxylase is a heterohexamer composed of biotin carboxyl carrier protein (AccB), biotin carboxylase (AccC) and two subunits each of ACCase subunit alpha (AccA) and ACCase subunit beta (AccD). The cofactor is Zn(2+).

The protein resides in the cytoplasm. It catalyses the reaction N(6)-carboxybiotinyl-L-lysyl-[protein] + acetyl-CoA = N(6)-biotinyl-L-lysyl-[protein] + malonyl-CoA. The protein operates within lipid metabolism; malonyl-CoA biosynthesis; malonyl-CoA from acetyl-CoA: step 1/1. Functionally, component of the acetyl coenzyme A carboxylase (ACC) complex. Biotin carboxylase (BC) catalyzes the carboxylation of biotin on its carrier protein (BCCP) and then the CO(2) group is transferred by the transcarboxylase to acetyl-CoA to form malonyl-CoA. The polypeptide is Acetyl-coenzyme A carboxylase carboxyl transferase subunit beta (Leuconostoc citreum (strain KM20)).